The sequence spans 163 residues: Staphylokinase (163 aa).

An N-terminal signal peptide occupies residues 1–27 (MLKRSLLFLTVLLLLFSFSSITNEVSA).

Belongs to the staphylokinase family.

It is found in the secreted. Functionally, potent plasminogen activator that converts plasminogen into plasmin. It forms a 1:1 complex with plasmin, which in turn activates other plasminogen molecules. The polypeptide is Staphylokinase (sak) (Staphylococcus aureus (strain MW2)).